A 159-amino-acid chain; its full sequence is Immunoglobulin J chain (159 aa).

The N-terminal stretch at 1–22 is a signal peptide; sequence MKNHLLFWGVLAVFIKAVHVKA. A Pyrrolidone carboxylic acid modification is found at Gln-23. 3 cysteine pairs are disulfide-bonded: Cys-35-Cys-123, Cys-94-Cys-114, and Cys-131-Cys-156. An N-linked (GlcNAc...) (complex) asparagine glycan is attached at Asn-71.

In terms of assembly, part of the secretory IgA (sIgA) complex that consists of two, four or five IgA monomers, and two additional non-Ig polypeptides, namely the JCHAIN and the secretory component (the proteolytic product of PIGR). Part of the secretory IgM (sIgM) complex that consists of five IgM monomers, and two additional non-Ig polypeptides, namely the JCHAIN and the secretory component (the proteolytic product of PIGR). JCHAIN-containing IgM interacts (via CH4 domain) with FCRM (via Ig-like domain).

Its subcellular location is the secreted. Its function is as follows. Serves to link two monomer units of either IgM or IgA. In the case of IgM, the J chain-joined dimer is a nucleating unit for the IgM pentamer, and in the case of IgA it induces dimers and/or larger polymers. It also helps to bind these immunoglobulins to secretory component. The polypeptide is Immunoglobulin J chain (Homo sapiens (Human)).